The sequence spans 430 residues: Glutamate-1-semialdehyde 2,1-aminomutase (430 aa).

Lys267 carries the post-translational modification N6-(pyridoxal phosphate)lysine.

This sequence belongs to the class-III pyridoxal-phosphate-dependent aminotransferase family. HemL subfamily. Homodimer. Pyridoxal 5'-phosphate serves as cofactor.

It localises to the cytoplasm. It catalyses the reaction (S)-4-amino-5-oxopentanoate = 5-aminolevulinate. It functions in the pathway porphyrin-containing compound metabolism; protoporphyrin-IX biosynthesis; 5-aminolevulinate from L-glutamyl-tRNA(Glu): step 2/2. In Cytophaga hutchinsonii (strain ATCC 33406 / DSM 1761 / CIP 103989 / NBRC 15051 / NCIMB 9469 / D465), this protein is Glutamate-1-semialdehyde 2,1-aminomutase.